Consider the following 143-residue polypeptide: ATP synthase epsilon chain (143 aa).

This sequence belongs to the ATPase epsilon chain family. As to quaternary structure, F-type ATPases have 2 components, CF(1) - the catalytic core - and CF(0) - the membrane proton channel. CF(1) has five subunits: alpha(3), beta(3), gamma(1), delta(1), epsilon(1). CF(0) has three main subunits: a, b and c.

It localises to the cell inner membrane. Produces ATP from ADP in the presence of a proton gradient across the membrane. The sequence is that of ATP synthase epsilon chain from Dichelobacter nodosus (strain VCS1703A).